We begin with the raw amino-acid sequence, 222 residues long: Chymotrypsin-1 (222 aa).

The Peptidase S1 domain maps to 1-221 (IVGGKDAPVG…FVSWINANLK (221 aa)). A disulfide bridge links C26 with C42. Active-site charge relay system residues include H41 and D87. Cystine bridges form between C151-C164 and C174-C198. The Charge relay system role is filled by S178.

The protein belongs to the peptidase S1 family.

It is found in the secreted. It localises to the extracellular space. The catalysed reaction is Preferential cleavage: Tyr-|-Xaa, Trp-|-Xaa, Phe-|-Xaa, Leu-|-Xaa.. This chain is Chymotrypsin-1, found in Solenopsis invicta (Red imported fire ant).